The sequence spans 333 residues: Gap junction alpha-4 protein (333 aa).

Residues 1 to 20 (MGDWGFLEKLLDQVQEHSTV) are Cytoplasmic-facing. A helical transmembrane segment spans residues 21–40 (VGKIWLTVLFIFRILILGLA). The Extracellular segment spans residues 41 to 76 (GESVWGDEQSDFECNTAQPGCTNVCYDQAFPISHIR). The chain crosses the membrane as a helical span at residues 77–99 (YWVLQFLFVSTPTLVYLGHVIYL). Residues 100 to 148 (SRREERLRQKEGELRALPAKDPRVERALASIERQMAKISVAEDGHLRIR) are Cytoplasmic-facing. A helical transmembrane segment spans residues 149 to 165 (GALMGTYVASVLCKSVL). Residues 166-207 (EAGFLYGQWRLYGWTMEPVFVCQRSPCPYLVDCFVSRPTEKT) lie on the Extracellular side of the membrane. Residues 208–230 (IFIIFMLVVGLISLVLNLLELAY) form a helical membrane-spanning segment. The Cytoplasmic portion of the chain corresponds to 231–333 (LLCRCLSRGV…SSSASKKQYV (103 aa)). The tract at residues 303 to 333 (SRAPLFLDPPPQTGRKSPSRPSSSASKKQYV) is disordered. Over residues 317-333 (RKSPSRPSSSASKKQYV) the composition is skewed to low complexity.

Belongs to the connexin family. Alpha-type (group II) subfamily. In terms of assembly, a connexon is composed of a hexamer of connexins.

The protein localises to the cell membrane. Its subcellular location is the cell junction. It is found in the gap junction. Functionally, one gap junction consists of a cluster of closely packed pairs of transmembrane channels, the connexons, through which materials of low MW diffuse from one cell to a neighboring cell. The chain is Gap junction alpha-4 protein (GJA4) from Bos taurus (Bovine).